A 458-amino-acid chain; its full sequence is Ectonucleotide pyrophosphatase/phosphodiesterase family member 7 (458 aa).

Residues 1–21 form the signal peptide; that stretch reads MRGPAVLLTVALATLLAPGAG. The Extracellular segment spans residues 22 to 433; that stretch reads APVQSQGSQN…RPTLLPKGRS (412 aa). 2 residues coordinate Zn(2+): aspartate 39 and threonine 75. Residues 72–78 are required for enzyme activity; the sequence is VTMTSPC. The active-site Nucleophile is threonine 75. Asparagine 96 provides a ligand contact to substrate. 4 N-linked (GlcNAc...) asparagine glycosylation sites follow: asparagine 100, asparagine 121, asparagine 146, and asparagine 168. Zn(2+)-binding residues include aspartate 199, histidine 203, aspartate 246, and histidine 247. N-linked (GlcNAc...) asparagine glycosylation occurs at asparagine 267. Histidine 353 serves as a coordination point for Zn(2+). The helical transmembrane segment at 434 to 454 threads the bilayer; the sequence is ALPPSSRPLLVMGLLGTVILL. At 455-458 the chain is on the cytoplasmic side; the sequence is SEVA.

Belongs to the nucleotide pyrophosphatase/phosphodiesterase family. Requires Zn(2+) as cofactor. In terms of processing, N-glycosylated; required for activity and transport to the plasma membrane. In terms of tissue distribution, detected in the colon (at protein level). Expressed in the duodenum, jejunum and liver and at low levels in the ileum. Expression was very low in the esophagus, stomach and colon.

The protein resides in the cell membrane. It carries out the reaction a sphingomyelin + H2O = phosphocholine + an N-acylsphing-4-enine + H(+). The enzyme catalyses 1-hexadecanoyl-sn-glycero-3-phosphocholine + H2O = 1-hexadecanoyl-sn-glycerol + phosphocholine + H(+). The catalysed reaction is a 1-O-alkyl-2-acetyl-sn-glycero-3-phosphocholine + H2O = a 1-O-alkyl-2-acetyl-sn-glycerol + phosphocholine + H(+). It catalyses the reaction 1-O-octadecyl-2-acetyl-sn-glycero-3-phosphocholine + H2O = 1-O-octadecyl-2-acetyl-sn-glycerol + phosphocholine + H(+). With respect to regulation, inhibited in a dose dependent manner by ATP, imidazole, orthovanadate and zinc ion. Not inhibited by ADP, AMP and EDTA. Choline-specific phosphodiesterase that hydrolyzes sphingomyelin releasing the ceramide and phosphocholine and therefore is involved in sphingomyelin digestion, ceramide formation, and fatty acid (FA) absorption in the gastrointestinal tract. Also has phospholipase C activity and can also cleave phosphocholine from palmitoyl lyso-phosphatidylcholine and platelet-activating factor (PAF) leading to its inactivation. Does not have nucleotide pyrophosphatase activity. May promote cholesterol absorption by affecting the levels of sphingomyelin derived from either diet or endogenous sources, in the intestinal lumen. The polypeptide is Ectonucleotide pyrophosphatase/phosphodiesterase family member 7 (Homo sapiens (Human)).